Reading from the N-terminus, the 623-residue chain is MATRGPTPDKARMGLPDRWLHCPKTGTLINNLFFPFKTPLCKMYDNQIAERRYQFHPAEVFSHPHLHGKKIGLWIDLTNTDRYYFREEVTEHECIYHKMKMAGRGVSPTQEDTDNFIKLVQEFHKKYPDRVVGVHCTHGFNRTGFLIAAYLFQVEEYGLDAAIGEFAENRQKGIYKQDYIDDLFARYDPTEDDKILAPEKPDWEREMSIGMSTQIDNGRPSTSQQIPATNGNNNQNGNQLSGGGDNSKLFMDGLIRGVKVCEDEGKKSMLQAKIKNLCKYNKQGFPGLQPVSLSRGNINLLEQESYMVSWKADGMRYIIYINDGDVYAFDRDNEVFEIENLDFVTKNGAPLMETLVDTEVIIDKVEINGAMCDQPRMLIYDIMRFNSVNVMKEPFYKRFEIIKTEIIDMRTAAFKTGRLKHENQIMSVRRKDFYDLEATAKLFGPKFVQHVGHEIDGLIFQPKKTKYETGRCDKVLKWKPPSHNSVDFLLKVEKKCKEGMLPEWIGYLFVQNLSDPFGTMKATATLKKYHNKIIECTLLVDNQGRPKEWKFMRERTDKSLPNGLRTAENVVETMVNPVTETYLIEYVNHALRVLKRAAAAHRHHQIHQQQLHEGEPEARRQKL.

The tract at residues 13 to 224 is TPase; sequence MGLPDRWLHC…IDNGRPSTSQ (212 aa). Residues 44–196 enclose the Tyrosine-protein phosphatase domain; it reads YDNQIAERRY…YDPTEDDKIL (153 aa). Cys-136 acts as the Phosphocysteine intermediate in catalysis. The segment covering 213-229 has biased composition (polar residues); the sequence is TQIDNGRPSTSQQIPAT. A disordered region spans residues 213–243; that stretch reads TQIDNGRPSTSQQIPATNGNNNQNGNQLSGG. Residues 230 to 239 show a composition bias toward low complexity; that stretch reads NGNNNQNGNQ. A GTase region spans residues 241 to 585; it reads SGGGDNSKLF…NPVTETYLIE (345 aa). Lys-311 serves as the catalytic N6-GMP-lysine intermediate. Residues Arg-316, Arg-331, 357–359, 477–479, and 553–558 contribute to the GTP site; these read DTE, KWK, and RERTDK. The interval 603–623 is disordered; the sequence is HHQIHQQQLHEGEPEARRQKL. Positions 610–623 are enriched in basic and acidic residues; that stretch reads QLHEGEPEARRQKL.

In the N-terminal section; belongs to the non-receptor class of the protein-tyrosine phosphatase family. The protein in the C-terminal section; belongs to the eukaryotic GTase family.

Its subcellular location is the nucleus. It carries out the reaction a 5'-end triphospho-ribonucleoside in mRNA + H2O = a 5'-end diphospho-ribonucleoside in mRNA + phosphate + H(+). The enzyme catalyses a 5'-end diphospho-ribonucleoside in mRNA + GTP + H(+) = a 5'-end (5'-triphosphoguanosine)-ribonucleoside in mRNA + diphosphate. With respect to regulation, RNA triphosphatase activity is inhibited by magnesium. In terms of biological role, bifunctional mRNA-capping enzyme exhibiting RNA 5'-triphosphate monophosphatase activity in the N-terminal part and mRNA guanylyltransferase activity in the C-terminal part. Catalyzes the first two steps of cap formation: by removing the gamma-phosphate from the 5'-triphosphate end of nascent mRNA to yield a diphosphate end, and by transferring the GMP moiety of GTP to the 5'-diphosphate terminus via a covalent enzyme-GMP reaction intermediate. The chain is mRNA-capping enzyme (cel-1) from Caenorhabditis elegans.